The chain runs to 318 residues: Ribose-phosphate pyrophosphokinase 2 (318 aa).

Position 96–101 (96–101) interacts with ATP; the sequence is RQDKKD. Asp-128, His-130, Asp-139, and Asp-143 together coordinate Mg(2+). His-130 lines the ATP pocket. Residues 212 to 227 are binding of phosphoribosylpyrophosphate; that stretch reads KDRVAILVDDMADTCG.

It belongs to the ribose-phosphate pyrophosphokinase family. Homodimer. The active form is probably a hexamer composed of 3 homodimers. Mg(2+) is required as a cofactor.

The enzyme catalyses D-ribose 5-phosphate + ATP = 5-phospho-alpha-D-ribose 1-diphosphate + AMP + H(+). It functions in the pathway metabolic intermediate biosynthesis; 5-phospho-alpha-D-ribose 1-diphosphate biosynthesis; 5-phospho-alpha-D-ribose 1-diphosphate from D-ribose 5-phosphate (route I): step 1/1. Activated by magnesium and inorganic phosphate. Competitively or non-competitively inhibited by ADP, 2,3-bisphosphoglyceride or GDP. In terms of biological role, catalyzes the synthesis of phosphoribosylpyrophosphate (PRPP) that is essential for nucleotide synthesis. This chain is Ribose-phosphate pyrophosphokinase 2 (prps2), found in Xenopus tropicalis (Western clawed frog).